Here is a 367-residue protein sequence, read N- to C-terminus: Alanine racemase (367 aa).

Residue Lys40 is the Proton acceptor; specific for D-alanine of the active site. Lys40 carries the post-translational modification N6-(pyridoxal phosphate)lysine. Arg136 serves as a coordination point for substrate. The active-site Proton acceptor; specific for L-alanine is Tyr263. Residue Met310 participates in substrate binding.

It belongs to the alanine racemase family. The cofactor is pyridoxal 5'-phosphate.

It carries out the reaction L-alanine = D-alanine. The protein operates within amino-acid biosynthesis; D-alanine biosynthesis; D-alanine from L-alanine: step 1/1. In terms of biological role, catalyzes the interconversion of L-alanine and D-alanine. May also act on other amino acids. This is Alanine racemase (alr) from Lactococcus lactis subsp. cremoris (strain SK11).